Reading from the N-terminus, the 219-residue chain is Protein ERP1 (219 aa).

The first 22 residues, 1 to 22 (MLLTSLLQVFACCLVLPAQVTA), serve as a signal peptide directing secretion. Over 23 to 186 (FYYYTSGAER…RDASEAVNSR (164 aa)) the chain is Lumenal. One can recognise a GOLD domain in the interval 32 to 131 (RKCFHKELSK…KTKIDVEFQV (100 aa)). Residues 187–207 (AMWWIVIQLIVLAVTCGWQMK) form a helical membrane-spanning segment. Residues 208 to 219 (HLGKFFVKQKIL) lie on the Cytoplasmic side of the membrane.

This sequence belongs to the EMP24/GP25L family. Associates with EMP24, ERV25 and ERP2.

The protein localises to the endoplasmic reticulum membrane. In terms of biological role, involved in vesicular protein trafficking. This is Protein ERP1 (ERP1) from Saccharomyces cerevisiae (strain ATCC 204508 / S288c) (Baker's yeast).